A 291-amino-acid chain; its full sequence is Pyridoxal 5'-phosphate synthase subunit PdxS (291 aa).

Aspartate 23 is a D-ribose 5-phosphate binding site. The Schiff-base intermediate with D-ribose 5-phosphate role is filled by lysine 80. D-ribose 5-phosphate is bound at residue glycine 152. Arginine 164 contributes to the D-glyceraldehyde 3-phosphate binding site. D-ribose 5-phosphate is bound by residues glycine 213 and 234–235; that span reads GS.

The protein belongs to the PdxS/SNZ family. As to quaternary structure, in the presence of PdxT, forms a dodecamer of heterodimers.

The enzyme catalyses aldehydo-D-ribose 5-phosphate + D-glyceraldehyde 3-phosphate + L-glutamine = pyridoxal 5'-phosphate + L-glutamate + phosphate + 3 H2O + H(+). It functions in the pathway cofactor biosynthesis; pyridoxal 5'-phosphate biosynthesis. In terms of biological role, catalyzes the formation of pyridoxal 5'-phosphate from ribose 5-phosphate (RBP), glyceraldehyde 3-phosphate (G3P) and ammonia. The ammonia is provided by the PdxT subunit. Can also use ribulose 5-phosphate and dihydroxyacetone phosphate as substrates, resulting from enzyme-catalyzed isomerization of RBP and G3P, respectively. This Clostridium acetobutylicum (strain ATCC 824 / DSM 792 / JCM 1419 / IAM 19013 / LMG 5710 / NBRC 13948 / NRRL B-527 / VKM B-1787 / 2291 / W) protein is Pyridoxal 5'-phosphate synthase subunit PdxS.